Consider the following 300-residue polypeptide: Recombination-associated protein RdgC (300 aa).

The protein belongs to the RdgC family.

It localises to the cytoplasm. The protein resides in the nucleoid. May be involved in recombination. This is Recombination-associated protein RdgC from Janthinobacterium sp. (strain Marseille) (Minibacterium massiliensis).